Consider the following 230-residue polypeptide: Type II restriction enzyme MjaV (230 aa).

The catalysed reaction is Endonucleolytic cleavage of DNA to give specific double-stranded fragments with terminal 5'-phosphates.. Its function is as follows. A P subtype restriction enzyme that recognizes the double-stranded sequence 5'-GTAC-3'; the cleavage site is unknown. The sequence is that of Type II restriction enzyme MjaV (mjaVR) from Methanocaldococcus jannaschii (strain ATCC 43067 / DSM 2661 / JAL-1 / JCM 10045 / NBRC 100440) (Methanococcus jannaschii).